A 147-amino-acid polypeptide reads, in one-letter code: Hemoglobin subunit beta-1/2 (147 aa).

The residue at position 2 (valine 2) is an N-acetylvaline. The Globin domain occupies 3–147 (HLSSEEKSAV…VANALAHKYH (145 aa)). Threonine 13 is modified (phosphothreonine). Serine 45 bears the Phosphoserine mark. At lysine 60 the chain carries N6-acetyllysine. Histidine 64 is a heme b binding site. Position 83 is an N6-acetyllysine (lysine 83). Histidine 93 lines the heme b pocket. Cysteine 94 carries the S-nitrosocysteine modification. Lysine 145 is modified (N6-acetyllysine).

It belongs to the globin family. As to quaternary structure, heterotetramer of two alpha chains and two beta chains. In terms of tissue distribution, red blood cells.

Involved in oxygen transport from the lung to the various peripheral tissues. This chain is Hemoglobin subunit beta-1/2 (HBB1), found in Oryctolagus cuniculus (Rabbit).